Here is a 365-residue protein sequence, read N- to C-terminus: Prostaglandin E2 receptor EP3 subtype (365 aa).

The tract at residues Met-1–Asp-22 is disordered. At Met-1–Ala-30 the chain is on the extracellular side. Polar residues predominate over residues Ala-13–Asp-22. Asn-16 carries an N-linked (GlcNAc...) asparagine glycan. A helical transmembrane segment spans residues Phe-31–Arg-55. Residues Arg-56 to Cys-68 lie on the Cytoplasmic side of the membrane. The helical transmembrane segment at Ile-69–Leu-89 threads the bilayer. At Val-90–Thr-108 the chain is on the extracellular side. A disulfide bond links Cys-107 and Cys-184. A helical membrane pass occupies residues Phe-109–Val-130. The Cytoplasmic portion of the chain corresponds to Glu-131–Thr-151. Residues Pro-152–Gly-173 traverse the membrane as a helical segment. The Extracellular portion of the chain corresponds to Arg-174–Ser-203. Asn-193 is a glycosylation site (N-linked (GlcNAc...) asparagine). Residues Val-204–Ile-229 traverse the membrane as a helical segment. The Cytoplasmic portion of the chain corresponds to Lys-230 to Gln-259. A helical transmembrane segment spans residues Leu-260–Phe-283. Residues Asn-284–Ser-303 lie on the Extracellular side of the membrane. Residues Phe-304–Leu-325 form a helical membrane-spanning segment. At Arg-326–Arg-365 the chain is on the cytoplasmic side.

Belongs to the G-protein coupled receptor 1 family. In terms of assembly, interacts (via C-terminus) with MKLN1. Ligand binding is affected by cAMP-dependent phosphorylation in brain membranes. Detected in platelets. Kidney, uterus, and mastocytoma cells, and in a lesser amount in brain, thymus, lung, heart, stomach and spleen.

The protein resides in the cell membrane. Its function is as follows. Receptor for prostaglandin E2 (PGE2). Required for normal development of fever in response to pyrinogens, including IL1B, prostaglandin E2 and bacterial lipopolysaccharide (LPS). Required for normal potentiation of platelet aggregation by prostaglandin E2, and thus plays a role in the regulation of blood coagulation. Required for increased HCO3(-) secretion in the duodenum in response to mucosal acidification, and thereby contributes to the protection of the mucosa against acid-induced ulceration. Not required for normal kidney function, normal urine volume and osmolality. In terms of biological role, receptor for prostaglandin E2 (PGE2); ligand binding activates a signaling cascade via G(i) proteins that leads to inhibition of adenylate cyclase. Shows high agonist-independent constitutive inhibition of adenylate cyclase. Receptor for prostaglandin E2 (PGE2); ligand binding activates a signaling cascade via G(i) proteins that leads to inhibition of adenylate cyclase. Requires much higher ligand concentrations than isoform Alpha for activation. Does not display agonist-independent constitutive inhibition of adenylate cyclase. Functionally, receptor for prostaglandin E2 (PGE2); ligand binding can activate several distinct signaling cascades, resulting in activation or inhibition of adenylate cyclase. The protein is Prostaglandin E2 receptor EP3 subtype (Ptger3) of Mus musculus (Mouse).